A 466-amino-acid polypeptide reads, in one-letter code: Integrin-linked protein kinase homolog pat-4 (466 aa).

ANK repeat units lie at residues 50 to 79, 83 to 112, and 116 to 145; these read HAFSLLHWAAKGGHVAIAEMLLSRGARVNS, GDDTSLHLAAAHGHRQIVVKLLSRKADVNA, and HGMTPLHYACFWGYEQIAEDLISCGAAVNV. The Protein kinase domain maps to 210 to 465; the sequence is LNLITKIAES…QIIPILERMI (256 aa).

It belongs to the protein kinase superfamily. TKL Ser/Thr protein kinase family. In terms of assembly, interacts (via protein kinase domain) with unc-112 (via N-terminus). Interacts (via ANK repeats) with unc-97 (via first LIM domain). Interacts (via protein kinase domain) with pat-6 (via C-terminus CH domain). May form a complex with unc-112, unc-97 and pat-6. Does not interact with integrin pat-3. Component of an integrin containing attachment complex, composed of at least pat-2, pat-3, pat-4, pat-6, unc-52, unc-97 and unc-112. Expressed in body wall muscle.

It is found in the cytoplasm. The protein resides in the myofibril. Its subcellular location is the sarcomere. It localises to the m line. The protein localises to the basal cell membrane. Its function is as follows. Probable pseudokinase that acts as an adapter protein. Component of an integrin containing attachment complex, which is required for muscle development and maintenance. Involved in the assembly of dense bodies and M lines during body wall muscle development by recruiting several of their components including integrin pat-3, cpna-1, unc-89 and unc-112 to integrin-mediated attachment sites. Plays a role in distal tip cell (DTC) migration and in oocyte development probably by regulating the actin cytoskeleton. During the formation of neuromuscular junctions at the larval stage, negatively regulates membrane protrusion from body wall muscles. May be involved in thermotolerance and lifespan. The protein is Integrin-linked protein kinase homolog pat-4 of Caenorhabditis elegans.